Consider the following 260-residue polypeptide: Zinc import ATP-binding protein ZnuC (260 aa).

Residues 14-229 (LTARNLCADR…PEFARLFGDQ (216 aa)) enclose the ABC transporter domain. Residue 46–53 (GPNGAGKS) participates in ATP binding.

This sequence belongs to the ABC transporter superfamily. Zinc importer (TC 3.A.1.15.5) family. As to quaternary structure, the complex is composed of two ATP-binding proteins (ZnuC), two transmembrane proteins (ZnuB) and a solute-binding protein (ZnuA).

The protein resides in the cell inner membrane. The enzyme catalyses Zn(2+)(out) + ATP(in) + H2O(in) = Zn(2+)(in) + ADP(in) + phosphate(in) + H(+)(in). Its function is as follows. Part of the ABC transporter complex ZnuABC involved in zinc import. Responsible for energy coupling to the transport system. This chain is Zinc import ATP-binding protein ZnuC, found in Magnetococcus marinus (strain ATCC BAA-1437 / JCM 17883 / MC-1).